The following is a 289-amino-acid chain: G1/S-specific cyclin-D2 (289 aa).

Positions 26 to 151 (VLQNLLTIEE…VVLGKLKWNL (126 aa)) constitute a Cyclin N-terminal domain. The segment at 264-289 (DQGDGSKSEDELDQASTPTDVRDIDL) is disordered. Serine 271 bears the Phosphoserine mark. Threonine 280 carries the phosphothreonine modification.

Belongs to the cyclin family. Cyclin D subfamily. As to quaternary structure, interacts with either CDK4 or CDK6 protein kinase to form a serine/threonine kinase holoenzyme complex. The cyclin subunit imparts substrate specificity to the complex. In terms of processing, phosphorylation at Thr-280 by MAP kinases is required for ubiquitination and degradation by the DCX(AMBRA1) complex. Post-translationally, ubiquitinated by the DCX(AMBRA1) complex during the transition from G1 to S cell phase, leading to its degradation: ubiquitination is dependent on Thr-280 phosphorylation. The DCX(AMBRA1) complex represents the major regulator of CCND2 stability during the G1/S transition. Polyubiquitinated by the SCF(FBXL2) complex, leading to proteasomal degradation.

It localises to the nucleus. The protein localises to the cytoplasm. The protein resides in the nucleus membrane. Regulatory component of the cyclin D2-CDK4 (DC) complex that phosphorylates and inhibits members of the retinoblastoma (RB) protein family including RB1 and regulates the cell-cycle during G(1)/S transition. Phosphorylation of RB1 allows dissociation of the transcription factor E2F from the RB/E2F complex and the subsequent transcription of E2F target genes which are responsible for the progression through the G(1) phase. Hypophosphorylates RB1 in early G(1) phase. Cyclin D-CDK4 complexes are major integrators of various mitogenenic and antimitogenic signals. This is G1/S-specific cyclin-D2 (CCND2) from Bos taurus (Bovine).